Here is a 365-residue protein sequence, read N- to C-terminus: GTPase Obg (365 aa).

Residues 1–177 (MFTDYVRILA…GQFLLELKTI (177 aa)) enclose the Obg domain. The disordered stretch occupies residues 64–85 (QFAEDGQPGKGQKRKGRDGKNL). In terms of domain architecture, OBG-type G spans 178-348 (ADVGFVGLPN…FLNSCRKSFE (171 aa)). GTP is bound by residues 184–191 (GLPNSGKS), 209–213 (FTTLK), 231–234 (DIPG), 300–303 (NKVD), and 329–331 (SAL). Ser191 and Thr211 together coordinate Mg(2+).

It belongs to the TRAFAC class OBG-HflX-like GTPase superfamily. OBG GTPase family. Monomer. The cofactor is Mg(2+).

Its subcellular location is the cytoplasm. An essential GTPase which binds GTP, GDP and possibly (p)ppGpp with moderate affinity, with high nucleotide exchange rates and a fairly low GTP hydrolysis rate. Plays a role in control of the cell cycle, stress response, ribosome biogenesis and in those bacteria that undergo differentiation, in morphogenesis control. The polypeptide is GTPase Obg (Methylacidiphilum infernorum (isolate V4) (Methylokorus infernorum (strain V4))).